The chain runs to 310 residues: tRNA-cytidine(32) 2-sulfurtransferase (310 aa).

The short motif at 45–50 is the PP-loop motif element; it reads SGGKDS. Residues C120, C123, and C211 each coordinate [4Fe-4S] cluster.

Belongs to the TtcA family. Homodimer. The cofactor is Mg(2+). [4Fe-4S] cluster is required as a cofactor.

It localises to the cytoplasm. The enzyme catalyses cytidine(32) in tRNA + S-sulfanyl-L-cysteinyl-[cysteine desulfurase] + AH2 + ATP = 2-thiocytidine(32) in tRNA + L-cysteinyl-[cysteine desulfurase] + A + AMP + diphosphate + H(+). Its pathway is tRNA modification. Catalyzes the ATP-dependent 2-thiolation of cytidine in position 32 of tRNA, to form 2-thiocytidine (s(2)C32). The sulfur atoms are provided by the cysteine/cysteine desulfurase (IscS) system. This Shewanella baltica (strain OS155 / ATCC BAA-1091) protein is tRNA-cytidine(32) 2-sulfurtransferase.